The sequence spans 113 residues: Small ribosomal subunit protein bS16 (113 aa).

The segment at 84 to 113 is disordered; the sequence is PKPAYTEQPKKSAPKKRAQERAAAAAAAAA.

This sequence belongs to the bacterial ribosomal protein bS16 family.

In Gluconacetobacter diazotrophicus (strain ATCC 49037 / DSM 5601 / CCUG 37298 / CIP 103539 / LMG 7603 / PAl5), this protein is Small ribosomal subunit protein bS16.